The chain runs to 217 residues: NADPH-dependent 3-demethoxyubiquinone 3-hydroxylase, mitochondrial (217 aa).

A mitochondrion-targeting transit peptide spans 1–35 (MSCAGAAAAPRLWRLRPGARRSLSAYGRRTSVRFR). Residues 11 to 29 (RLWRLRPGARRSLSAYGRR) form a required for nuclear localization region. 2 repeat units span residues 48-129 (AVDR…TALL) and 130-217 (GKEG…SERL). The segment at 48–217 (AVDRIIRVDH…RVAIYLSERL (170 aa)) is 2 X approximate tandem repeats. Position 51 (arginine 51) interacts with NADH. Fe cation-binding residues include glutamate 60, glutamate 90, histidine 93, glutamate 142, glutamate 178, and histidine 181. The NADH site is built by tyrosine 212 and arginine 216.

Belongs to the COQ7 family. As to quaternary structure, component of a multi-subunit COQ enzyme complex. Interacts with COQ8B and COQ6. Interacts with COQ9. Fe cation is required as a cofactor. Expressed dominantly in heart and skeletal muscle.

The protein localises to the mitochondrion inner membrane. It localises to the mitochondrion. The protein resides in the nucleus. Its subcellular location is the chromosome. It carries out the reaction a 5-methoxy-2-methyl-3-(all-trans-polyprenyl)benzoquinone + NADH + O2 = a 3-demethylubiquinone + NAD(+) + H2O. Its pathway is cofactor biosynthesis; ubiquinone biosynthesis. Functionally, catalyzes the hydroxylation of the 5-methoxy-2-methyl-3-(all-trans-polyprenyl)benzoquinone at the C6 position and participates in the biosynthesis of ubiquinone. Catalyzes the reaction through a substrate-mediated reduction pathway, whereby NADH shuttles electrons to 5-methoxy-2-methyl-3-(all-trans-decaprenyl)benzoquinone, which then transfers the electrons to the two Fe(3+) centers. The binding of 5-methoxy-2-methyl-3-(all-trans-polyprenyl)benzoquinone (DMQn) mediates reduction of the diiron center by nicotinamide adenine dinucleotide (NADH) and initiates oxygen activation for subsequent DMQ hydroxylation. The physiological substrates are 5-methoxy-2-methyl-3-(all-trans-nonaprenyl)benzoquinone (DMQ(9)) and 5-methoxy-2-methyl-3-(all-trans-decaprenyl)benzoquinone (DMQ(10)), however in vitro the enzyme does not have any specificity concerning the length of the polyprenyl tail, and accepts tails of various lengths with similar efficiency. Also has a structural role in the COQ enzyme complex, stabilizing other COQ polypeptides. Involved in lifespan determination in a ubiquinone-independent manner. Plays a role in modulating mitochondrial stress responses, acting in the nucleus, perhaps via regulating gene expression, independent of its characterized mitochondrial function in ubiquinone biosynthesis. In Homo sapiens (Human), this protein is NADPH-dependent 3-demethoxyubiquinone 3-hydroxylase, mitochondrial.